Reading from the N-terminus, the 179-residue chain is Putative ankyrin repeat protein RF_0922 (179 aa).

ANK repeat units follow at residues 5–34 (KGCTALTWAVDKGLEKVCEILIPNMSEQAI), 40–72 (NGSTALTLAAWKGLEKICRLLIPKMSPQAINHV), 75–104 (NGNTALTLAAWKGLEKICELLIPKMSSQAI), 110–139 (NGDTALTLAAWKGLEKICEMLIPKMSEQAI), and 145–174 (NGNTALTLAADKSLEKICEMLIPKMSKQAI).

This Rickettsia felis (strain ATCC VR-1525 / URRWXCal2) (Rickettsia azadi) protein is Putative ankyrin repeat protein RF_0922.